The chain runs to 120 residues: Ribonuclease P protein component (120 aa).

It belongs to the RnpA family. As to quaternary structure, consists of a catalytic RNA component (M1 or rnpB) and a protein subunit.

The catalysed reaction is Endonucleolytic cleavage of RNA, removing 5'-extranucleotides from tRNA precursor.. RNaseP catalyzes the removal of the 5'-leader sequence from pre-tRNA to produce the mature 5'-terminus. It can also cleave other RNA substrates such as 4.5S RNA. The protein component plays an auxiliary but essential role in vivo by binding to the 5'-leader sequence and broadening the substrate specificity of the ribozyme. In Blochmanniella floridana, this protein is Ribonuclease P protein component.